Here is a 328-residue protein sequence, read N- to C-terminus: Dolichyl-diphosphooligosaccharide--protein glycosyltransferase subunit MAGT1 (328 aa).

A signal peptide spans 1–22; the sequence is MAALPVLVLVLLLACGGPRAAG. Residues 23–177 lie on the Extracellular side of the membrane; the sequence is QKRKEMVLSE…DVNIRVIRPP (155 aa). Residues 40 to 168 form the Thioredoxin domain; it reads WTSKRSVIRM…LARWVADRTD (129 aa). Asn64 is a glycosylation site (N-linked (GlcNAc...) asparagine). A disulfide bridge connects residues Cys80 and Cys83. A helical membrane pass occupies residues 178–198; the sequence is NYAGPLMLGLLLAVIGGLVYL. Topologically, residues 199–211 are cytoplasmic; the sequence is RGSNLDFLYNKTG. A helical transmembrane segment spans residues 212–232; that stretch reads WAFAALCFVLAMTSGQMWNHI. Residues 233–257 are Extracellular-facing; sequence RGPPYAHKNPHTGQVNYIHGSSQAQ. The helical transmembrane segment at 258–278 threads the bilayer; it reads FVAETHIVLLFNGGVTLGMVL. At 279–293 the chain is on the cytoplasmic side; it reads LHEAATSDMDVGKRK. The helical transmembrane segment at 294–314 threads the bilayer; that stretch reads IMCIAGIGLVVFFFSWLLSVF. The Extracellular portion of the chain corresponds to 315-328; the sequence is RSKYHGYPYSFLMS.

The protein belongs to the OST3/OST6 family. In terms of assembly, accessory component of the STT3B-containing form of the oligosaccharyltransferase (OST) complex. OST exists in two different complex forms which contain common core subunits RPN1, RPN2, OST48, OST4, DAD1 and TMEM258, either STT3A or STT3B as catalytic subunits, and form-specific accessory subunits. OST can form stable complexes with the Sec61 complex or with both the Sec61 and TRAP complexes.

It is found in the cell membrane. The protein localises to the endoplasmic reticulum. It localises to the endoplasmic reticulum membrane. It functions in the pathway protein modification; protein glycosylation. Accessory component of the STT3B-containing form of the N-oligosaccharyl transferase (OST) complex which catalyzes the transfer of a high mannose oligosaccharide from a lipid-linked oligosaccharide donor to an asparagine residue within an Asn-X-Ser/Thr consensus motif in nascent polypeptide chains. Involved in N-glycosylation of STT3B-dependent substrates. Specifically required for the glycosylation of a subset of acceptor sites that are near cysteine residues; in this function seems to act redundantly with TUSC3. In its oxidized form proposed to form transient mixed disulfides with a glycoprotein substrate to facilitate access of STT3B to the unmodified acceptor site. Also has oxidoreductase-independent functions in the STT3B-containing OST complex possibly involving substrate recognition. Could indirectly play a role in Mg(2+) transport in epithelial cells. This chain is Dolichyl-diphosphooligosaccharide--protein glycosyltransferase subunit MAGT1, found in Gallus gallus (Chicken).